The primary structure comprises 758 residues: Dachshund homolog 1 (758 aa).

Disordered stretches follow at residues 1 to 105 (MAVP…SNCN) and 134 to 185 (INAS…TPQN). The span at 20–53 (ISTSASSSGTTTSTSSATSSPAPSIGPPASSGPT) shows a compositional bias: low complexity. A compositionally biased stretch (gly residues) spans 73–102 (TGGGGGGGGSGGGGGSSGNGGGGGGGGGGS). The segment covering 140–163 (SSSSSSSSSSSSSSSSSSSSSSSS) has biased composition (low complexity). Residues 174 to 185 (STPSPVENTPQN) are compositionally biased toward polar residues. Residues 189–275 (KMVDLRGAKV…LISRKDFETL (87 aa)) are DACHbox-N. Positions 189 to 384 (KMVDLRGAKV…VGSSDGSWDK (196 aa)) are interaction with SIX6 and HDAC3. 4 disordered regions span residues 280–302 (TNAS…PENS), 358–414 (SNNQ…PLSH), 474–532 (SPPS…RIPV), and 544–564 (MGLS…GHDM). Composition is skewed to polar residues over residues 292 to 301 (RTQSVTSPEN), 358 to 380 (SNNQ…SSDG), and 387 to 399 (LPSS…QASI). S491 bears the Phosphoserine mark. Over residues 506 to 524 (SHPSSHRSSSVSSSPARTE) the composition is skewed to low complexity. Residues 555-564 (KEGDLAGHDM) show a composition bias toward basic and acidic residues. The segment at 616–696 (SSIETLLTNI…KAKRKLQEAL (81 aa)) is DACHbox-C. Positions 627-706 (GLLKVAIDNA…EFETKRREQA (80 aa)) are interaction with SIN3A. Residues 630-718 (KVAIDNARAQ…TLKQAASTDS (89 aa)) are a coiled coil.

It belongs to the DACH/dachshund family. In terms of assembly, interacts with SIX1, SIX6 and EYA3. Interacts with NCOR1 and HDAC3 through its N-terminus. Interacts with SIN3A through its C-terminus. Interacts with SMAD3 and SMAD4. Widely expressed. Isoform 2 is found in brain, heart, kidney, liver, leukocytes and spleen. Isoform 3 is found in liver and heart. Isoform 4 is found in spleen.

Its subcellular location is the nucleus. Transcription factor that is involved in regulation of organogenesis. Seems to be a regulator of SIX1, SIX6 and probably SIX5. Corepression of precursor cell proliferation in myoblasts by SIX1 is switched to coactivation through recruitment of EYA3 to the SIX1-DACH1 complex. Transcriptional activation also seems to involve association of CREBBP. Seems to act as a corepressor of SIX6 in regulating proliferation by directly repressing cyclin-dependent kinase inhibitors, including the p27Kip1 promoter. Inhibits TGF-beta signaling through interaction with SMAD4 and NCOR1. Binds to chromatin DNA via its DACHbox-N domain. The polypeptide is Dachshund homolog 1 (DACH1) (Homo sapiens (Human)).